The chain runs to 297 residues: N-acetylmuramoyl-L-alanine amidase XlyA (297 aa).

A signal peptide spans 1 to 44 (MVNIIQDFIPVGANNRPGYAMTPLYITVHNTANTAVGADAAAHA). The N-acetylmuramoyl-L-alanine amidase domain occupies 45-140 (RYLKNPDTTT…KYWSGKECPR (96 aa)). The region spanning 159 to 203 (QTYVVKQGDTLTSIARAFGVTVAQLQEWNNIEDPNLIRVGQVLIV) is the LysM domain.

The protein belongs to the N-acetylmuramoyl-L-alanine amidase 2 family.

It localises to the secreted. The enzyme catalyses Hydrolyzes the link between N-acetylmuramoyl residues and L-amino acid residues in certain cell-wall glycopeptides.. Functionally, autolysins are involved in some important biological processes such as cell separation, cell-wall turnover, competence for genetic transformation, formation of the flagella and sporulation. The chain is N-acetylmuramoyl-L-alanine amidase XlyA (xlyA) from Bacillus subtilis (strain 168).